The chain runs to 552 residues: SLVKSDQICIGYHANNSTEQVDTIMEKNVTVTHAQDILEKTHNGKLCDLDGVKPLILRDCSVAGWLLGNPMCDEFINVPEWSYIVEKASPANDLCYPGDFNDYEELKHLLSRINHFEKIQIIPKSSWSNHEASSGVSSACPYLGKSSFFRNVVWLIKKNSAYPTIKRSYNNTNQEDLLVLWGIHHPNDAAEQTKLYQNPTTYISVGTSTLNQRLVPKIATRSKVNGQSGRMEFFWTILKPNDAINFESNGNFIAPEYAYKIVKKGDSAIMKSELEYGNCNTKCQTPMGAINSSMPFHNIHPLTIGECPKYVKSNRLVLATGLRNTPQRERRRKKRGLFGAIAGFIEGGWQGMVDGWYGYHHSNEQGSGYAADKESTQKAIDGVTNKVNSIIDKMNTQFEAVGREFNNLERRIENLNKKMEDGFLDVWTYNAELLVLMENERTLDFHDSNVKNLYDKVRLQLRDNAKELGNGCFEFYHKCDNECMESVKNGTYDYPQYSEEARLNREEISGVKLESMGTYQILSIYSTVASSLTLAIMVAGLSLWMCSNGSLQ.

The Extracellular segment spans residues 1 to 520 (SLVKSDQICI…VKLESMGTYQ (520 aa)). Intrachain disulfides connect Cys-9–Cys-472, Cys-47–Cys-279, Cys-60–Cys-72, Cys-95–Cys-140, Cys-283–Cys-307, and Cys-479–Cys-483. Asn-15, Asn-16, and Asn-28 each carry an N-linked (GlcNAc...) asparagine; by host glycan. N-linked (GlcNAc...) asparagine; by host glycosylation is found at Asn-170 and Asn-291. Residue Asn-489 is glycosylated (N-linked (GlcNAc...) asparagine; by host). The helical transmembrane segment at 521 to 541 (ILSIYSTVASSLTLAIMVAGL) threads the bilayer. Residues 542 to 552 (SLWMCSNGSLQ) are Cytoplasmic-facing. The S-palmitoyl cysteine; by host moiety is linked to residue Cys-546.

Belongs to the influenza viruses hemagglutinin family. As to quaternary structure, homotrimer of disulfide-linked HA1-HA2. Post-translationally, palmitoylated. In terms of processing, in natural infection, inactive HA is matured into HA1 and HA2 outside the cell by one or more trypsin-like, arginine-specific endoprotease secreted by the bronchial epithelial cells. One identified protease that may be involved in this process is secreted in lungs by club cells.

It localises to the virion membrane. Its subcellular location is the host apical cell membrane. Binds to sialic acid-containing receptors on the cell surface, bringing about the attachment of the virus particle to the cell. This attachment induces virion internalization either through clathrin-dependent endocytosis or through clathrin- and caveolin-independent pathway. Plays a major role in the determination of host range restriction and virulence. Class I viral fusion protein. Responsible for penetration of the virus into the cell cytoplasm by mediating the fusion of the membrane of the endocytosed virus particle with the endosomal membrane. Low pH in endosomes induces an irreversible conformational change in HA2, releasing the fusion hydrophobic peptide. Several trimers are required to form a competent fusion pore. This chain is Hemagglutinin, found in Influenza A virus (strain A/Chicken/Hong Kong/YU562/2001 H5N1 genotype B).